We begin with the raw amino-acid sequence, 369 residues long: Cyclin-dependent kinase 5 activator 2 (369 aa).

The span at 1–11 (MGTVLSLSPAS) shows a compositional bias: polar residues. Disordered regions lie at residues 1–55 (MGTV…SRLK), 72–176 (ASAK…SPRR), and 330–369 (EAAASTGGPPSGSSASTTSSSSARDSCATGAKHWTMNLDR). Gly2 carries the N-myristoyl glycine lipid modification. Residues 74–84 (AKKKKGSKKVT) show a composition bias toward basic residues. Phosphothreonine is present on Thr84. Basic and acidic residues predominate over residues 99–112 (RNRENLLRKGRDGP). Residues 122–144 (AVPVPTVPTTAATCEPPSGGSAA) show a composition bias toward low complexity. A compositionally biased stretch (pro residues) spans 145–171 (APPPGSGGGKPPPPPPPAPQAAPPAPG). The span at 331 to 352 (AAASTGGPPSGSSASTTSSSSA) shows a compositional bias: low complexity.

It belongs to the cyclin-dependent kinase 5 activator family. Heterodimer of a catalytic subunit and a regulatory subunit. Myristoylated. The Gly-2-Ala mutant is absent of the cell periphery, suggesting that a proper myristoylation signal is essential for the proper distribution of CDK5R2 (p39).

It is found in the cell membrane. Activator of CDK5/TPKII. The polypeptide is Cyclin-dependent kinase 5 activator 2 (Cdk5r2) (Mus musculus (Mouse)).